The chain runs to 137 residues: Protein apnoia (137 aa).

3 helical membrane passes run 7–27 (IVFA…QQQA), 55–75 (LVPG…LTVV), and 76–96 (SIKG…QMLS).

As to quaternary structure, interacts with crb.

Its subcellular location is the apical cell membrane. Functionally, transmembrane protein that plays a key role in trachea development by regulating crb localization and maintenance at the apical cell membrane. Required for anisotropic apical surface expansion important for tracheal tube elongation and lumen stability at larval stages. The sequence is that of Protein apnoia from Drosophila melanogaster (Fruit fly).